We begin with the raw amino-acid sequence, 267 residues long: Chlorophyll a-b binding protein 3A, chloroplastic (267 aa).

The N-terminal 34 residues, 1 to 34, are a transit peptide targeting the chloroplast; sequence MAASTMALSSSTFAGKTVKLAPSSSEITGNGRIT. A helical membrane pass occupies residues 153–173; sequence LVHAQSILAIWACQVVLMGAV. Residues V154, S158, Q166, E174, R177, and L183 each contribute to the chlorophyll b site. Chlorophyll a contacts are provided by K214, E215, N218, R220, Q232, H247, and A256. The helical transmembrane segment at 221-241 threads the bilayer; it reads LAMFSMFGFFVQAIVTGKGPL. Position 263 (F263) interacts with chlorophyll b.

This sequence belongs to the light-harvesting chlorophyll a/b-binding (LHC) protein family. The LHC complex consists of chlorophyll a-b binding proteins. The cofactor is Binds at least 14 chlorophylls (8 Chl-a and 6 Chl-b) and carotenoids such as lutein and neoxanthin.. Photoregulated by reversible phosphorylation of its threonine residues.

It is found in the plastid. The protein resides in the chloroplast thylakoid membrane. In terms of biological role, the light-harvesting complex (LHC) functions as a light receptor, it captures and delivers excitation energy to photosystems with which it is closely associated. This is Chlorophyll a-b binding protein 3A, chloroplastic (CAB3A) from Solanum lycopersicum (Tomato).